Here is a 448-residue protein sequence, read N- to C-terminus: Fibulin-5 (448 aa).

The first 23 residues, 1–23 (MPGFKRILTVTVLALCLPTPGNA), serve as a signal peptide directing secretion. The EGF-like 1; calcium-binding domain occupies 42 to 82 (DVDECRTIPEACRGDMMCVNQNGGYLCIPRTNPVYRGPYSN). Disulfide bonds link C46/C59, C53/C68, C131/C144, C138/C153, C155/C166, C172/C181, C177/C190, C192/C205, C211/C221, C217/C230, C232/C245, C251/C262, C258/C271, C273/C286, C292/C305, C299/C314, and C320/C332. The Cell attachment site motif lies at 54-56 (RGD). In terms of domain architecture, EGF-like 2; calcium-binding spans 127-167 (DVDECATDSHQCNPTQICINTEGGYTCSCTDGYWLLEGQCL). In terms of domain architecture, EGF-like 3; calcium-binding spans 168 to 206 (DIDECRYGYCQQLCANVPGSYSCTCNPGFTLNEDGRSCQ). In terms of domain architecture, EGF-like 4; calcium-binding spans 207–246 (DVNECATENPCVQTCVNTYGSFICRCDPGYELEDDGVHCS). Residues 245 to 448 (CSDMDECSFS…LRIYVSQYPF (204 aa)) form an interaction with LOXL1 region. In terms of domain architecture, EGF-like 5; calcium-binding spans 247–287 (DMDECSFSEFLCQHECVNQPGTYFCSCPAGYILLDDNRSCQ). 2 N-linked (GlcNAc...) asparagine glycosylation sites follow: N283 and N296. One can recognise an EGF-like 6; calcium-binding domain in the interval 288 to 333 (DINECEHRNHTCILQQTCYNLQGGFKCIDPIRCEEPYLRISDNRCM).

The protein belongs to the fibulin family. As to quaternary structure, homodimer. Monomer, homodimerizes in presence of Ca(2+). Interacts with ELN. Interacts (via N-terminus) with the integrins ITGAV/ITGB3, ITGAV/ITGB5 and ITGA9/ITGB1. Interacts with FBN1 (via N-terminal domain). Forms a ternary complex with ELN and FBN1. Interacts with EFEMP2 with moderate affinity. Interacts with LOXL1. Post-translationally, N-glycosylated.

It is found in the secreted. Its subcellular location is the extracellular space. The protein localises to the extracellular matrix. Functionally, essential for elastic fiber formation, is involved in the assembly of continuous elastin (ELN) polymer and promotes the interaction of microfibrils and ELN. Stabilizes and organizes elastic fibers in the skin, lung and vasculature. Promotes adhesion of endothelial cells through interaction of integrins and the RGD motif. Vascular ligand for integrin receptors which may play a role in vascular development and remodeling. May act as an adapter that mediates the interaction between FBN1 and ELN. The sequence is that of Fibulin-5 (FBLN5) from Bos taurus (Bovine).